An 882-amino-acid polypeptide reads, in one-letter code: Translation initiation factor IF-2 (882 aa).

Disordered regions lie at residues 95–176 (PSVT…ASSL) and 229–289 (EHAR…SALQ). The span at 116-133 (TKNTFSQESLNKTSPQKS) shows a compositional bias: polar residues. Basic and acidic residues-rich tracts occupy residues 137–172 (KAIEKAKIESPKKERHSLKEKQKKEAQSEKARREAE) and 229–246 (EHARAAEDENDAKVEGDR). Residues 247–262 (RSRHRGTKTTKQKKTN) show a composition bias toward basic residues. The segment covering 263-276 (KLSESKTDREEARA) has biased composition (basic and acidic residues). Residues 382–551 (HRAPVVTIMG…LLQAEVLELK (170 aa)) form the tr-type G domain. The segment at 391–398 (GHVDHGKT) is G1. A GTP-binding site is contributed by 391–398 (GHVDHGKT). Residues 416-420 (GITQH) are G2. A G3 region spans residues 437–440 (DTPG). GTP-binding positions include 437–441 (DTPGH) and 491–494 (NKID). The tract at residues 491–494 (NKID) is G4. The G5 stretch occupies residues 527-529 (SAK).

This sequence belongs to the TRAFAC class translation factor GTPase superfamily. Classic translation factor GTPase family. IF-2 subfamily.

It localises to the cytoplasm. One of the essential components for the initiation of protein synthesis. Protects formylmethionyl-tRNA from spontaneous hydrolysis and promotes its binding to the 30S ribosomal subunits. Also involved in the hydrolysis of GTP during the formation of the 70S ribosomal complex. The sequence is that of Translation initiation factor IF-2 from Hamiltonella defensa subsp. Acyrthosiphon pisum (strain 5AT).